The primary structure comprises 299 residues: Small ribosomal subunit biogenesis GTPase RsgA (299 aa).

In terms of domain architecture, CP-type G spans 73–232 (CSWLTRPQVA…VADTPGFNRP (160 aa)). GTP is bound by residues 122–125 (TKGD) and 174–182 (GPSGVGKSS). Zn(2+) is bound by residues Cys257, Cys262, His264, and Cys270.

It belongs to the TRAFAC class YlqF/YawG GTPase family. RsgA subfamily. As to quaternary structure, monomer. Associates with 30S ribosomal subunit, binds 16S rRNA. Zn(2+) is required as a cofactor.

It is found in the cytoplasm. Functionally, one of several proteins that assist in the late maturation steps of the functional core of the 30S ribosomal subunit. Helps release RbfA from mature subunits. May play a role in the assembly of ribosomal proteins into the subunit. Circularly permuted GTPase that catalyzes slow GTP hydrolysis, GTPase activity is stimulated by the 30S ribosomal subunit. This is Small ribosomal subunit biogenesis GTPase RsgA from Parasynechococcus marenigrum (strain WH8102).